The chain runs to 412 residues: Cytochrome P450-SOY (412 aa).

Positions 1–25 (MTESTTDPARQNLDPTSPAPATSFP) are enriched in polar residues. A disordered region spans residues 1–38 (MTESTTDPARQNLDPTSPAPATSFPQDRGCPYHPPAGY). Position 361 (C361) interacts with heme.

It belongs to the cytochrome P450 family. Heme serves as cofactor.

Its subcellular location is the cytoplasm. The protein is Cytochrome P450-SOY (cyp105D1) of Streptomyces griseus.